Reading from the N-terminus, the 382-residue chain is C-type lectin domain-containing protein 38 (382 aa).

The Cytoplasmic segment spans residues 1–40 (MAIFYDDPLERLNQPIKTKSYRKKQVVQRVHVFIFDNWKL). The chain crosses the membrane as a helical span at residues 41 to 61 (ILLGILNLIFLIIAIVFAILF). Residues 62 to 382 (FVGSADCAQL…FFLCKRAIDF (321 aa)) are Extracellular-facing. Positions 97-116 (NAITTTQGTPSNKTSTTTPS) are disordered. The span at 100–116 (TTTQGTPSNKTSTTTPS) shows a compositional bias: low complexity. N-linked (GlcNAc...) asparagine glycosylation is found at Asn-108 and Asn-189. C-type lectin domains lie at 129-250 (VGTK…FVCE) and 264-377 (YNKN…FLCK). 4 cysteine pairs are disulfide-bonded: Cys-150/Cys-249, Cys-223/Cys-241, Cys-285/Cys-376, and Cys-348/Cys-368.

As to expression, expressed in ventral cord motor neurons and PLM touch neurons.

It localises to the membrane. Its function is as follows. Involved in negative modulation of unc-40-mediated axon outgrowth. Required for proper presynaptic development in axons that have reached their targets. May function in concert with E3 ubiquitin-protein ligase rpm-1 in regulating axon outgrowth. This chain is C-type lectin domain-containing protein 38, found in Caenorhabditis elegans.